We begin with the raw amino-acid sequence, 433 residues long: MLDIQLLRKDLDGVAKRLADRGYTLDVAAFSALEAERRAIQTHTEELQARRNSLSKQIGAMKGKGEDTSAVMAEVGGIGDDMKASEAKLGEIQARLSDLMLGMPNVAHESVPVGKDEADNVEARRWGTPRQFDFEVKDHVDVGTPLGLDFETGAKLAGARFTMLRGPIARLHRALAQFMIDTHTQQHGYTETYTPYIVNPEILYGTGQLPKFADDMFRVEKGGAENTVTQYLISTSEISLTNTVRESIVDASALPIKLTAHSPCFRSEAGSYGRDTRGMIRQHQFDKVEMVQVVAPETSYAALDEMVGHAEAILQKLGLPYRVITLCTGDMGFSAAKTFDLEVWLPAQNTYREISSCSNTEAFQARRMQARFRNAQGKPELVHTLNGSGLAVGRTLVAVLENYQNADGSVTVPEVLRPYMGGMERIDAPAQAS.

235 to 237 lines the L-serine pocket; it reads TSE. ATP is bound at residue 266 to 268; that stretch reads RSE. Glu289 is an L-serine binding site. 353–356 contacts ATP; the sequence is EISS. Ser388 contacts L-serine.

It belongs to the class-II aminoacyl-tRNA synthetase family. Type-1 seryl-tRNA synthetase subfamily. Homodimer. The tRNA molecule binds across the dimer.

The protein resides in the cytoplasm. The enzyme catalyses tRNA(Ser) + L-serine + ATP = L-seryl-tRNA(Ser) + AMP + diphosphate + H(+). It carries out the reaction tRNA(Sec) + L-serine + ATP = L-seryl-tRNA(Sec) + AMP + diphosphate + H(+). It participates in aminoacyl-tRNA biosynthesis; selenocysteinyl-tRNA(Sec) biosynthesis; L-seryl-tRNA(Sec) from L-serine and tRNA(Sec): step 1/1. Its function is as follows. Catalyzes the attachment of serine to tRNA(Ser). Is also able to aminoacylate tRNA(Sec) with serine, to form the misacylated tRNA L-seryl-tRNA(Sec), which will be further converted into selenocysteinyl-tRNA(Sec). This Burkholderia cenocepacia (strain HI2424) protein is Serine--tRNA ligase.